We begin with the raw amino-acid sequence, 324 residues long: Lactonase drp35 (324 aa).

Positions 47, 109, 111, 129, 132, 134, 137, 184, 235, and 236 each coordinate Ca(2+). The active-site Proton donor is the Asp235.

It belongs to the SMP-30/CGR1 family. It depends on Ca(2+) as a cofactor.

It localises to the cytoplasm. Exhibits lactonase activity. Acts in cells with perturbed membrane integrity and is possibly related to the membrane homeostasis. This Staphylococcus aureus (strain MW2) protein is Lactonase drp35 (drp35).